The sequence spans 493 residues: Tripartite motif-containing protein 5 (493 aa).

Ala-2 carries the N-acetylalanine modification. An RING-type zinc finger spans residues 15–59 (CPICLELLTQPLSLDCGHSFCQACLTANHKKSTLDKGERSCPVCR). Phosphoserine is present on Ser-86. The B box-type zinc finger occupies 90–132 (QKVDHCARHGEKLLLFCKEDGKVICWLCERSQEHRGHHTFLTE). Cys-95, His-98, Cys-117, and His-123 together coordinate Zn(2+). Residues 131 to 223 (TEEVAQKYQV…LTKSETEMVQ (93 aa)) adopt a coiled-coil conformation. Residues 185–198 (FEQLRDILDWEESN) form a required for interaction with GABARAP and for autophagy region. One can recognise a B30.2/SPRY domain in the interval 281 to 493 (LKGMLEVFRE…VPMTLCSPSS (213 aa)).

Belongs to the TRIM/RBCC family. In terms of assembly, can form homodimers and homotrimers. In addition to lower-order dimerization, also exhibits a higher-order multimerization and both low- and high-order multimerizations are essential for its restriction activity. Interacts with BTBD1 and BTBD2. Interacts with PSMC4, PSMC5, PSMD7 and HSPA8/HSC70. Interacts (via B30.2/SPRY domain) with HSPA1A/B. Interacts with PSMC2, MAP3K7/TAK1, TAB2 and TAB3. Interacts with SQSTM1. Interacts with TRIM6 and TRIM34. Interacts with ULK1 (phosphorylated form), GABARAP, GABARAPL1, GABARAPL2, MAP1LC3A, MAP1LC3C and BECN1. Post-translationally, degraded in a proteasome-independent fashion in the absence of viral infection but in a proteasome-dependent fashion following exposure to restriction sensitive virus. Autoubiquitinated in a RING finger- and UBE2D2-dependent manner. Monoubiquitinated by TRIM21. Deubiquitinated by Yersinia YopJ. Ubiquitination may not lead to proteasomal degradation.

It localises to the cytoplasm. The protein resides in the nucleus. It catalyses the reaction S-ubiquitinyl-[E2 ubiquitin-conjugating enzyme]-L-cysteine + [acceptor protein]-L-lysine = [E2 ubiquitin-conjugating enzyme]-L-cysteine + N(6)-ubiquitinyl-[acceptor protein]-L-lysine.. It participates in protein modification; protein ubiquitination. In terms of biological role, capsid-specific restriction factor that prevents infection from non-host-adapted retroviruses. Blocks viral replication early in the life cycle, after viral entry but before reverse transcription. In addition to acting as a capsid-specific restriction factor, also acts as a pattern recognition receptor that activates innate immune signaling in response to the retroviral capsid lattice. Binding to the viral capsid triggers its E3 ubiquitin ligase activity, and in concert with the heterodimeric ubiquitin conjugating enzyme complex UBE2V1-UBE2N (also known as UBC13-UEV1A complex) generates 'Lys-63'-linked polyubiquitin chains, which in turn are catalysts in the autophosphorylation of the MAP3K7/TAK1 complex (includes TAK1, TAB2, and TAB3). Activation of the MAP3K7/TAK1 complex by autophosphorylation results in the induction and expression of NF-kappa-B and MAPK-responsive inflammatory genes, thereby leading to an innate immune response in the infected cell. Plays a role in regulating autophagy through activation of autophagy regulator BECN1 by causing its dissociation from its inhibitors BCL2 and TAB2. The polypeptide is Tripartite motif-containing protein 5 (TRIM5) (Pongo abelii (Sumatran orangutan)).